We begin with the raw amino-acid sequence, 464 residues long: Glycine receptor subunit alpha-3 (464 aa).

Positions 1 to 33 are cleaved as a signal peptide; it reads MAHVRHFRTLVSGFYFWEAALLLSLVATKETNS. Residues 34–255 lie on the Extracellular side of the membrane; the sequence is ARSRSAPMSP…RFHLERQMGY (222 aa). Asn-71 carries an N-linked (GlcNAc...) asparagine glycan. A disulfide bridge links Cys-171 with Cys-185. Zn(2+) contacts are provided by Glu-225 and Asp-227. Cys-231 and Cys-242 are disulfide-bonded. Strychnine is bound at residue 235–240; sequence YNTGKF. His-248 serves as a coordination point for Zn(2+). Residues 256–277 traverse the membrane as a helical segment; the sequence is YLIQMYIPSLLIVILSWVSFWI. Residues 278–282 lie on the Cytoplasmic side of the membrane; that stretch reads NMDAA. The helical transmembrane segment at 283–303 threads the bilayer; that stretch reads PARVALGITTVLTMTTQSSGS. Over 304–314 the chain is Extracellular; sequence RASLPKVSYVK. The helical transmembrane segment at 315 to 335 threads the bilayer; it reads AIDIWMAVCLLFVFSALLEYA. At 336–430 the chain is on the cytoplasmic side; the sequence is AVNFVSRQHK…FIDRAKKIDT (95 aa). Ser-370 bears the Phosphoserine mark. A Phosphoserine; by PKA modification is found at Ser-379. Residues 431–451 traverse the membrane as a helical segment; the sequence is ISRACFPLAFLIFNIFYWVIY. The Extracellular segment spans residues 452 to 464; the sequence is KILRHEDIHQQQD.

It belongs to the ligand-gated ion channel (TC 1.A.9) family. Glycine receptor (TC 1.A.9.3) subfamily. GLRA3 sub-subfamily. Homopentamer (in vitro). Heteropentamer composed of GLRA3 and GLRB. Both homopentamers and heteropentamers form functional ion channels, but their characteristics are subtly different. Post-translationally, phosphorylated by PKA; this causes down-regulation of channel activity. Dephosphorylated in response to activation of HTR1A signaling; this increases channel activity. Detected in brainstem, also in neurons that control rhythmic breathing. Detected in superficial laminae of the dorsal horn of the thoracic spinal cord. Detected in dentate gyrus in hippocampus, especially in stratum granulare. Detected in the inner plexiform layer in the retina (at protein level). Detected in midbrain, thalamus, brain cortex, hippocampus, and at lower levels in cerebellum.

The protein resides in the postsynaptic cell membrane. It is found in the synapse. The protein localises to the perikaryon. It localises to the cell projection. Its subcellular location is the dendrite. The protein resides in the cell membrane. It carries out the reaction chloride(in) = chloride(out). With respect to regulation, inhibited by prostaglandin E2, probably via PKA-mediated phosphorylation at Ser-379. In terms of biological role, glycine receptors are ligand-gated chloride channels. Channel opening is triggered by extracellular glycine. Channel characteristics depend on the subunit composition; heteropentameric channels display faster channel closure. Plays an important role in the down-regulation of neuronal excitability. Contributes to the generation of inhibitory postsynaptic currents. Contributes to increased pain perception in response to increased prostaglandin E2 levels. Plays a role in the regulation of breathing rhythm, especially of the duration of the postinspiratory phase. Plays a role in cellular responses to ethanol. The sequence is that of Glycine receptor subunit alpha-3 (Glra3) from Mus musculus (Mouse).